The following is a 451-amino-acid chain: Interferon regulatory factor 4 (451 aa).

Positions 21–129 (NGKLRQWLID…DPYKVYRIVP (109 aa)) form a DNA-binding region, IRF tryptophan pentad repeat. Residues Ser-447 and Ser-448 each carry the phosphoserine; by ROCK2 modification.

The protein belongs to the IRF family. As to quaternary structure, interacts with the BATF-JUNB heterodimer. Interacts with BATF (via bZIP domain); the interaction is direct. Interacts with SPIB. Interacts with DEF6. Directly interacts with NLRP3 in the nucleus of Th2 cells; this interaction enhances IRF4 ability to bind to the IL4 promoter and is required for optimal IRF4-dependent IL4 transcription. Interacts with SPI1. Post-translationally, phosphorylation by ROCK2 regulates IL-17 and IL-21 production. Lymphoid cells.

The protein resides in the nucleus. The protein localises to the cytoplasm. In terms of biological role, transcriptional activator. Binds to the interferon-stimulated response element (ISRE) of the MHC class I promoter. Binds the immunoglobulin lambda light chain enhancer, together with PU.1. Probably plays a role in ISRE-targeted signal transduction mechanisms specific to lymphoid cells. Involved in CD8(+) dendritic cell differentiation by forming a complex with the BATF-JUNB heterodimer in immune cells, leading to recognition of AICE sequence (5'-TGAnTCA/GAAA-3'), an immune-specific regulatory element, followed by cooperative binding of BATF and IRF4 and activation of genes. This chain is Interferon regulatory factor 4, found in Homo sapiens (Human).